Reading from the N-terminus, the 833-residue chain is Zinc transporter ZIP10 (833 aa).

A signal peptide spans 1–25; sequence MKVHIHTKFCLICLLTFIFHHCNHC. A compositionally biased stretch (basic and acidic residues) spans 30 to 48; sequence DHGPEELHRHHRGMTESES. Disordered stretches follow at residues 30–54 and 137–167; these read DHGP…FSVQ and AENH…IKAD. The segment covering 137–147 has biased composition (polar residues); sequence AENHTTTSVTS. Positions 152–167 are enriched in basic and acidic residues; the sequence is KCDPEKEAAELPIKAD. N-linked (GlcNAc...) asparagine glycans are attached at residues N191 and N198. Residues 200-209 show a composition bias toward basic and acidic residues; sequence SVAHSEHGEP. Disordered stretches follow at residues 200 to 257 and 271 to 335; these read SVAH…NHDH and RVHS…EDDR. A glycan (N-linked (GlcNAc...) asparagine) is linked at N218. Basic residues predominate over residues 229 to 241; that stretch reads VKVRRKEKGKRKK. Composition is skewed to basic and acidic residues over residues 281 to 315 and 326 to 335; these read HLPE…EAPH and SHKDQSEDDR. N341 carries an N-linked (GlcNAc...) asparagine glycan. Helical transmembrane passes span 413–433 and 440–460; these read IISI…VPII and FLLT…ALLH. The segment at 466 to 485 is disordered; it reads QGGHDHSHQHTHGHGHSHGH. The chain crosses the membrane as a helical span at residues 497 to 517; that stretch reads VLKGLVALGGIYLLFIIEHCI. A phosphothreonine mark is found at T538 and T555. At S593 the chain carries Phosphoserine. Helical transmembrane passes span 689–709, 734–754, 761–781, and 803–823; these read AIGA…IAVF, IVYN…GTAV, ITLW…LVDM, and FILQ…IALY.

This sequence belongs to the ZIP transporter (TC 2.A.5) family. In terms of assembly, interacts with SLC39A6. This interaction triggers cells to undergo EMT and mitosis. Found in a complex with SLC39A6, SLC39A10 and with the 'Ser-727' phosphorylated form of STAT3 throughout mitosis. Found in a complex with SLC39A6, SLC39A10 and with NCAM1; this complex controls NCAM1 phosphorylation and integration into focal adhesion complexes during epithelial-tomesenchymal transition. Found in a complex with SLC39A6, SLC39A10 and with GSK3B that controls NCAM1 phosphorylation. Post-translationally, undergoes N-terminal ectodomain shedding. Expressed in the liver, kidney and brain.

Its subcellular location is the cell membrane. It is found in the apical cell membrane. It carries out the reaction Zn(2+)(in) = Zn(2+)(out). Functionally, zinc-influx transporter. When associated with SLC39A6, the heterodimer formed by SLC39A10 and SLC39A6 mediates cellular zinc uptake to trigger cells to undergo epithelial-to-mesenchymal transition (EMT). mediates cellular zinc uptake to trigger cells to undergo epithelial-to-mesenchymal transition (EMT). SLC39A10-SLC39A6 heterodimers play also an essentiel role in initiating mitosis by importing zinc into cells to initiate a pathway resulting in the onset of mitosis. Plays an important for both mature B-cell maintenance and humoral immune responses. When associated with SLC39A10, the heterodimer controls NCAM1 phosphorylation and integration into focal adhesion complexes during EMT. This is Zinc transporter ZIP10 from Mus musculus (Mouse).